A 1247-amino-acid polypeptide reads, in one-letter code: Lon protease homolog 2, peroxisomal (1247 aa).

The Lon N-terminal domain occupies 22 to 402; that stretch reads LPTYTLDSNL…LINEMILQLI (381 aa). Disordered stretches follow at residues 76–103, 447–503, and 626–655; these read SGNS…ETYH, TKNR…DVDD, and DQSD…SPTS. Positions 459–477 are enriched in low complexity; the sequence is PGPASSSGPSFSNGKSSPG. Basic and acidic residues predominate over residues 626–639; that stretch reads DQSDKSQPIKDNSK. Residue 721 to 728 participates in ATP binding; that stretch reads GPPGTGKT. The 242-residue stretch at 989–1230 folds into the Lon proteolytic domain; the sequence is TVGVGVVHGL…YDIIKIVWNE (242 aa). Active-site residues include S1099 and K1142.

It belongs to the peptidase S16 family.

The protein localises to the peroxisome matrix. It catalyses the reaction Hydrolysis of proteins in presence of ATP.. ATP-dependent serine protease that mediates the selective degradation of misfolded and unassembled polypeptides in the peroxisomal matrix. Necessary for type 2 peroxisome targeting signal (PTS2)-containing protein processing and facilitates peroxisome matrix protein import. The polypeptide is Lon protease homolog 2, peroxisomal (Candida dubliniensis (strain CD36 / ATCC MYA-646 / CBS 7987 / NCPF 3949 / NRRL Y-17841) (Yeast)).